A 274-amino-acid polypeptide reads, in one-letter code: N-acetylmuramic acid 6-phosphate etherase (274 aa).

In terms of domain architecture, SIS spans 54–217 (IIPRIDSGGR…STSVMIKLGR (164 aa)). Catalysis depends on Glu-82, which acts as the Proton donor. Glu-113 is a catalytic residue.

It belongs to the GCKR-like family. MurNAc-6-P etherase subfamily. In terms of assembly, homodimer.

It catalyses the reaction N-acetyl-D-muramate 6-phosphate + H2O = N-acetyl-D-glucosamine 6-phosphate + (R)-lactate. The protein operates within amino-sugar metabolism; N-acetylmuramate degradation. Specifically catalyzes the cleavage of the D-lactyl ether substituent of MurNAc 6-phosphate, producing GlcNAc 6-phosphate and D-lactate. In Christiangramia forsetii (strain DSM 17595 / CGMCC 1.15422 / KT0803) (Gramella forsetii), this protein is N-acetylmuramic acid 6-phosphate etherase.